Reading from the N-terminus, the 175-residue chain is ATP-dependent protease subunit HslV (175 aa).

The active site involves T2. Na(+) is bound by residues G158, C161, and T164.

This sequence belongs to the peptidase T1B family. HslV subfamily. A double ring-shaped homohexamer of HslV is capped on each side by a ring-shaped HslU homohexamer. The assembly of the HslU/HslV complex is dependent on binding of ATP.

The protein resides in the cytoplasm. The enzyme catalyses ATP-dependent cleavage of peptide bonds with broad specificity.. Allosterically activated by HslU binding. Functionally, protease subunit of a proteasome-like degradation complex believed to be a general protein degrading machinery. This chain is ATP-dependent protease subunit HslV, found in Haemophilus influenzae (strain PittGG).